A 229-amino-acid polypeptide reads, in one-letter code: UPF0488 protein C8orf33 homolog (229 aa).

Alanine 2 is subject to N-acetylalanine. Arginine 27 carries the post-translational modification Omega-N-methylarginine. Residues 55 to 101 (SRAHPLGDEGGTASKKQNKKKKTRNRASVANGGEKASEKLAPEEVPL) form a disordered region. Residues 70-79 (KQNKKKKTRN) show a composition bias toward basic residues. Serine 82 is subject to Phosphoserine.

The protein belongs to the UPF0488 family.

The sequence is that of UPF0488 protein C8orf33 homolog from Pongo abelii (Sumatran orangutan).